Here is a 194-residue protein sequence, read N- to C-terminus: MSFYATIILALALSMDAFAVAVCKGATLHKPHFREALRTGFIFGIIEASTPIIGWALGLYTSQYIIQWDHWVAFGLLVILGGRMIYQSLKRGDDCICEEAPQRHGSLSLIATGIATSLDAMAIGVGLAFLQVDIVHTAMTIGMMTMIMATLGMLIGRYIGPVLGKKAEIIGGMVLIAIGFNILFEHLDLFMYAH.

The next 6 helical transmembrane spans lie at 3 to 23 (FYATIILALALSMDAFAVAVC), 40 to 60 (GFIFGIIEASTPIIGWALGLY), 65 to 85 (IIQWDHWVAFGLLVILGGRMI), 109 to 129 (LIATGIATSLDAMAIGVGLAF), 134 to 154 (IVHTAMTIGMMTMIMATLGML), and 169 to 189 (IIGGMVLIAIGFNILFEHLDL).

This sequence belongs to the MntP (TC 9.B.29) family.

The protein localises to the cell inner membrane. Functionally, probably functions as a manganese efflux pump. The polypeptide is Putative manganese efflux pump MntP (Proteus mirabilis (strain HI4320)).